A 304-amino-acid polypeptide reads, in one-letter code: Acetyl-coenzyme A carboxylase carboxyl transferase subunit beta (304 aa).

The region spanning 23-292 (VWTKCDSCGQ…PNPEAPREGV (270 aa)) is the CoA carboxyltransferase N-terminal domain. Residues cysteine 27, cysteine 30, cysteine 46, and cysteine 49 each coordinate Zn(2+). The C4-type zinc finger occupies 27-49 (CDSCGQVLYRAELERNLEVCPKC). The disordered stretch occupies residues 284 to 304 (NPEAPREGVVVPPVPDQEPEA). Residues 295-304 (PPVPDQEPEA) are compositionally biased toward pro residues.

Belongs to the AccD/PCCB family. As to quaternary structure, acetyl-CoA carboxylase is a heterohexamer composed of biotin carboxyl carrier protein (AccB), biotin carboxylase (AccC) and two subunits each of ACCase subunit alpha (AccA) and ACCase subunit beta (AccD). Requires Zn(2+) as cofactor.

The protein localises to the cytoplasm. The enzyme catalyses N(6)-carboxybiotinyl-L-lysyl-[protein] + acetyl-CoA = N(6)-biotinyl-L-lysyl-[protein] + malonyl-CoA. The protein operates within lipid metabolism; malonyl-CoA biosynthesis; malonyl-CoA from acetyl-CoA: step 1/1. Its function is as follows. Component of the acetyl coenzyme A carboxylase (ACC) complex. Biotin carboxylase (BC) catalyzes the carboxylation of biotin on its carrier protein (BCCP) and then the CO(2) group is transferred by the transcarboxylase to acetyl-CoA to form malonyl-CoA. The sequence is that of Acetyl-coenzyme A carboxylase carboxyl transferase subunit beta from Shigella flexneri serotype 5b (strain 8401).